We begin with the raw amino-acid sequence, 338 residues long: Taste receptor type 2 member 39 (338 aa).

Topologically, residues 1–30 are extracellular; it reads MLGRCFPPDTKEKQQLRMTKLCDPAESELS. A helical transmembrane segment spans residues 31–51; sequence PFLITLILAVLLAEYLIGIIA. At 52–74 the chain is on the cytoplasmic side; that stretch reads NGFIMAIHAAEWVQNKAVSTSGR. Residues 75 to 95 traverse the membrane as a helical segment; sequence ILVFLSVSRIALQSLMMLEIT. Residues 96 to 116 lie on the Extracellular side of the membrane; the sequence is ISSTSLSFYSEDAVYYAFKIS. The chain crosses the membrane as a helical span at residues 117 to 137; it reads FIFLNFCSLWFAAWLSFFYFV. Residues 138–156 lie on the Cytoplasmic side of the membrane; that stretch reads KIANFSYPLFLKLRWRITG. The helical transmembrane segment at 157–177 threads the bilayer; it reads LIPWLLWLSVFISFSHSMFCI. Over 178–205 the chain is Extracellular; that stretch reads NICTVYCNNSFPIHSSNSTKKTYLSEIN. 2 N-linked (GlcNAc...) asparagine glycosylation sites follow: Asn185 and Asn194. Residues 206-226 traverse the membrane as a helical segment; the sequence is VVGLAFFFNLGIVTPLIMFIL. The Cytoplasmic segment spans residues 227 to 262; sequence TATLLILSLKRHTLHMGSNATGSNDPSMEAHMGAIK. A helical membrane pass occupies residues 263–283; the sequence is AISYFLILYIFNAVALFIYLS. Residues 284 to 291 lie on the Extracellular side of the membrane; sequence NMFDINSL. A helical transmembrane segment spans residues 292–312; sequence WNNLCQIIMAAYPAGHSILPI. The Cytoplasmic portion of the chain corresponds to 313-338; the sequence is QDNPGLRRAWKRLQLRLHLYPKEWTL.

It belongs to the G-protein coupled receptor T2R family.

Its subcellular location is the membrane. In terms of biological role, receptor that may play a role in the perception of bitterness and is gustducin-linked. May play a role in sensing the chemical composition of the gastrointestinal content. The activity of this receptor may stimulate alpha gustducin, mediate PLC-beta-2 activation and lead to the gating of TRPM5. In Pan paniscus (Pygmy chimpanzee), this protein is Taste receptor type 2 member 39 (TAS2R39).